The sequence spans 310 residues: tRNA dimethylallyltransferase (310 aa).

13–20 (GPTASGKT) contributes to the ATP binding site. 15 to 20 (TASGKT) is a binding site for substrate. Interaction with substrate tRNA regions lie at residues 38–41 (DSAL), 162–166 (QRLSR), 243–248 (RCVGYR), and 276–283 (KRQITWLR).

This sequence belongs to the IPP transferase family. As to quaternary structure, monomer. It depends on Mg(2+) as a cofactor.

It carries out the reaction adenosine(37) in tRNA + dimethylallyl diphosphate = N(6)-dimethylallyladenosine(37) in tRNA + diphosphate. Its function is as follows. Catalyzes the transfer of a dimethylallyl group onto the adenine at position 37 in tRNAs that read codons beginning with uridine, leading to the formation of N6-(dimethylallyl)adenosine (i(6)A). This Aliivibrio fischeri (strain ATCC 700601 / ES114) (Vibrio fischeri) protein is tRNA dimethylallyltransferase.